Consider the following 445-residue polypeptide: Ribosomal protein uS12 methylthiotransferase RimO (445 aa).

The MTTase N-terminal domain maps to 4–119 (IKVALVSLGC…LLESIKVFLK (116 aa)). Positions 13, 48, 82, 156, 160, and 163 each coordinate [4Fe-4S] cluster. One can recognise a Radical SAM core domain in the interval 142-372 (TTPTYTAYVR…MILQQSISKD (231 aa)). The region spanning 375–441 (KEKIGKTYEV…EYDLIGVVYN (67 aa)) is the TRAM domain.

Belongs to the methylthiotransferase family. RimO subfamily. [4Fe-4S] cluster serves as cofactor.

Its subcellular location is the cytoplasm. It carries out the reaction L-aspartate(89)-[ribosomal protein uS12]-hydrogen + (sulfur carrier)-SH + AH2 + 2 S-adenosyl-L-methionine = 3-methylsulfanyl-L-aspartate(89)-[ribosomal protein uS12]-hydrogen + (sulfur carrier)-H + 5'-deoxyadenosine + L-methionine + A + S-adenosyl-L-homocysteine + 2 H(+). Its function is as follows. Catalyzes the methylthiolation of an aspartic acid residue of ribosomal protein uS12. This Clostridium botulinum (strain ATCC 19397 / Type A) protein is Ribosomal protein uS12 methylthiotransferase RimO.